We begin with the raw amino-acid sequence, 355 residues long: Putative [LysW]-L-2-aminoadipate/[LysW]-L-glutamate phosphate reductase (355 aa).

Residue 13-16 (SGMT) coordinates NADP(+). C153 is an active-site residue. N323 lines the NADP(+) pocket.

This sequence belongs to the NAGSA dehydrogenase family. Type 1 subfamily. LysY sub-subfamily.

The protein resides in the cytoplasm. The enzyme catalyses [amino-group carrier protein]-C-terminal-N-(1-carboxy-5-oxopentan-1-yl)-L-glutamine + phosphate + NADP(+) = [amino-group carrier protein]-C-terminal-N-(1-carboxy-5-phosphooxy-5-oxopentan-1-yl)-L-glutamine + NADPH + H(+). It carries out the reaction [amino-group carrier protein]-C-terminal-gamma-(L-glutamyl-5-semialdehyde)-L-glutamate + phosphate + NADP(+) = [amino-group carrier protein]-C-terminal-gamma-(5-phospho-L-glutamyl)-L-glutamate + NADPH + H(+). Its pathway is amino-acid biosynthesis; L-lysine biosynthesis via AAA pathway; L-lysine from L-alpha-aminoadipate (Thermus route): step 3/5. It participates in amino-acid biosynthesis; L-arginine biosynthesis. Its function is as follows. Involved in both the arginine and lysine biosynthetic pathways. In Aeropyrum pernix (strain ATCC 700893 / DSM 11879 / JCM 9820 / NBRC 100138 / K1), this protein is Putative [LysW]-L-2-aminoadipate/[LysW]-L-glutamate phosphate reductase.